The following is a 577-amino-acid chain: Arginine--tRNA ligase (577 aa).

Positions 122–132 (PNVAKEMHVGH) match the 'HIGH' region motif.

The protein belongs to the class-I aminoacyl-tRNA synthetase family. In terms of assembly, monomer.

The protein localises to the cytoplasm. The enzyme catalyses tRNA(Arg) + L-arginine + ATP = L-arginyl-tRNA(Arg) + AMP + diphosphate. The sequence is that of Arginine--tRNA ligase (argS) from Salmonella typhimurium (strain SL1344).